Reading from the N-terminus, the 397-residue chain is Elongation factor Tu-1 (397 aa).

Positions lysine 10–glutamate 206 constitute a tr-type G domain. The segment at glycine 19–threonine 26 is G1. Glycine 19–threonine 26 provides a ligand contact to GTP. Threonine 26 contacts Mg(2+). The segment at glycine 62–serine 66 is G2. The interval aspartate 83–glycine 86 is G3. Residues aspartate 83 to histidine 87 and asparagine 138 to aspartate 141 contribute to the GTP site. Residues asparagine 138–aspartate 141 are G4. Residues serine 176–leucine 178 form a G5 region.

This sequence belongs to the TRAFAC class translation factor GTPase superfamily. Classic translation factor GTPase family. EF-Tu/EF-1A subfamily. As to quaternary structure, monomer.

It localises to the cytoplasm. The enzyme catalyses GTP + H2O = GDP + phosphate + H(+). Its function is as follows. GTP hydrolase that promotes the GTP-dependent binding of aminoacyl-tRNA to the A-site of ribosomes during protein biosynthesis. This chain is Elongation factor Tu-1, found in Streptomyces coelicolor (strain ATCC BAA-471 / A3(2) / M145).